Reading from the N-terminus, the 363-residue chain is Src kinase-associated phosphoprotein 1 (363 aa).

The disordered stretch occupies residues 62–94 (PFPSDYKEEDGSDDNRSSSLGRSAQSDDASLAS). Low complexity predominate over residues 84–94 (SAQSDDASLAS). A PH domain is found at 118–221 (NVLKQGYLEK…WVDQIKIVLR (104 aa)). The interval 227 to 273 (VIPVDDEEEEEEEEETYDDIEGEGGPPLPQPLSGTWGRGGDTGAADE) is disordered. The span at 230 to 248 (VDDEEEEEEEEETYDDIEG) shows a compositional bias: acidic residues. In terms of domain architecture, SH3 spans 301–362 (EYANYYQGLW…PKDFLHPAYI (62 aa)).

The protein belongs to the SKAP family. Homodimer. Phosphorylated on tyrosines.

It is found in the cytoplasm. Its subcellular location is the nucleus. It localises to the cell membrane. In terms of biological role, positively regulates T-cell receptor signaling. Required for optimal conjugation between T-cells and antigen-presenting cells. This Takifugu rubripes (Japanese pufferfish) protein is Src kinase-associated phosphoprotein 1 (skap1).